The following is a 345-amino-acid chain: Heat-inducible transcription repressor HrcA (345 aa).

The protein belongs to the HrcA family.

Its function is as follows. Negative regulator of class I heat shock genes (grpE-dnaK-dnaJ and groELS operons). Prevents heat-shock induction of these operons. The protein is Heat-inducible transcription repressor HrcA of Tetragenococcus halophilus (Pediococcus halophilus).